A 1464-amino-acid chain; its full sequence is ABC transporter G family member 35 (1464 aa).

A disordered region spans residues 1-26; it reads MDAAAEMQKVVSLRRGGGGSSSRGAA. Residues 173–446 enclose the ABC transporter 1 domain; sequence ANALGILPNK…FELMGFKCPE (274 aa). 206–213 is a binding site for ATP; sequence GPPGSGKT. The ABC transmembrane type-2 1 domain occupies 524–737; it reads ELLKANIDRE…AQNAISVNEF (214 aa). 7 helical membrane passes run 542 to 562, 575 to 595, 630 to 650, 662 to 682, 686 to 706, 715 to 735, and 774 to 794; these read FVYI…MTVF, GVIF…NGLS, IPMS…VIGF, LLML…GGAA, IVAN…GGFI, WWIW…ISVN, and IGFG…TLAL. The 253-residue stretch at 867–1119 folds into the ABC transporter 2 domain; it reads LTFDNIKYSV…ELIKYFEGIK (253 aa). Residue 912–919 coordinates ATP; sequence GVSGAGKT. The ABC transmembrane type-2 2 domain occupies 1192–1406; that stretch reads NQCLACLWKM…TLYGLVASQF (215 aa). A run of 7 helical transmembrane segments spans residues 1213–1233, 1243–1263, 1299–1319, 1326–1346, 1356–1376, 1387–1407, and 1436–1456; these read AIRL…FWDL, LFNA…LNSQ, FPYT…MIGF, FFWY…YGMM, VASI…GFII, WYCW…SQFG, and VVAV…GFAI.

Belongs to the ABC transporter superfamily. ABCG family. PDR (TC 3.A.1.205) subfamily.

Its subcellular location is the membrane. In terms of biological role, may be a general defense protein. The chain is ABC transporter G family member 35 from Oryza sativa subsp. japonica (Rice).